The chain runs to 418 residues: Gamma-glutamyl phosphate reductase (418 aa).

This sequence belongs to the gamma-glutamyl phosphate reductase family.

The protein localises to the cytoplasm. The catalysed reaction is L-glutamate 5-semialdehyde + phosphate + NADP(+) = L-glutamyl 5-phosphate + NADPH + H(+). The protein operates within amino-acid biosynthesis; L-proline biosynthesis; L-glutamate 5-semialdehyde from L-glutamate: step 2/2. Its function is as follows. Catalyzes the NADPH-dependent reduction of L-glutamate 5-phosphate into L-glutamate 5-semialdehyde and phosphate. The product spontaneously undergoes cyclization to form 1-pyrroline-5-carboxylate. The protein is Gamma-glutamyl phosphate reductase of Histophilus somni (strain 129Pt) (Haemophilus somnus).